A 204-amino-acid chain; its full sequence is Thymidylate kinase (204 aa).

12 to 19 is a binding site for ATP; the sequence is GVDGAGKS.

The protein belongs to the thymidylate kinase family.

It catalyses the reaction dTMP + ATP = dTDP + ADP. In terms of biological role, phosphorylation of dTMP to form dTDP in both de novo and salvage pathways of dTTP synthesis. The sequence is that of Thymidylate kinase from Thiobacillus denitrificans (strain ATCC 25259 / T1).